We begin with the raw amino-acid sequence, 456 residues long: tRNA modification GTPase MnmE (456 aa).

Positions 21, 85, and 124 each coordinate (6S)-5-formyl-5,6,7,8-tetrahydrofolate. A TrmE-type G domain is found at 220-379 (QFRIVLYGEP…LLDAIKERTG (160 aa)). A K(+)-binding site is contributed by Asn230. GTP-binding positions include 230–235 (NTGKSS), 249–255 (SEIPGTT), and 274–277 (DTAG). Ser234 contributes to the Mg(2+) binding site. K(+) contacts are provided by Ser249, Ile251, and Thr254. Thr255 contributes to the Mg(2+) binding site. Lys456 is a (6S)-5-formyl-5,6,7,8-tetrahydrofolate binding site.

This sequence belongs to the TRAFAC class TrmE-Era-EngA-EngB-Septin-like GTPase superfamily. TrmE GTPase family. Homodimer. Heterotetramer of two MnmE and two MnmG subunits. The cofactor is K(+).

It is found in the cytoplasm. Functionally, exhibits a very high intrinsic GTPase hydrolysis rate. Involved in the addition of a carboxymethylaminomethyl (cmnm) group at the wobble position (U34) of certain tRNAs, forming tRNA-cmnm(5)s(2)U34. The polypeptide is tRNA modification GTPase MnmE (Leptospira interrogans serogroup Icterohaemorrhagiae serovar copenhageni (strain Fiocruz L1-130)).